Reading from the N-terminus, the 122-residue chain is Acidic phospholipase A2 2 (122 aa).

Cystine bridges form between cysteine 26-cysteine 115, cysteine 28-cysteine 44, cysteine 43-cysteine 95, cysteine 49-cysteine 122, cysteine 50-cysteine 88, cysteine 57-cysteine 81, and cysteine 75-cysteine 86. Ca(2+) contacts are provided by tyrosine 27, glycine 29, and glycine 31. Residue histidine 47 is part of the active site. Aspartate 48 provides a ligand contact to Ca(2+). Aspartate 89 is an active-site residue.

Belongs to the phospholipase A2 family. Group II subfamily. D49 sub-subfamily. Ca(2+) is required as a cofactor. As to expression, expressed by the venom gland.

It is found in the secreted. It catalyses the reaction a 1,2-diacyl-sn-glycero-3-phosphocholine + H2O = a 1-acyl-sn-glycero-3-phosphocholine + a fatty acid + H(+). Snake venom phospholipase A2 (PLA2) that has high lipolytic activity. PLA2 catalyzes the calcium-dependent hydrolysis of the 2-acyl groups in 3-sn-phosphoglycerides. The polypeptide is Acidic phospholipase A2 2 (Craspedocephalus gramineus (Bamboo pit viper)).